A 427-amino-acid polypeptide reads, in one-letter code: 3-phosphoshikimate 1-carboxyvinyltransferase (427 aa).

Residues lysine 20, serine 21, and arginine 25 each coordinate 3-phosphoshikimate. Residue lysine 20 coordinates phosphoenolpyruvate. Phosphoenolpyruvate contacts are provided by glycine 92 and arginine 120. The 3-phosphoshikimate site is built by serine 166, glutamine 168, aspartate 312, and lysine 339. Glutamine 168 lines the phosphoenolpyruvate pocket. Aspartate 312 acts as the Proton acceptor in catalysis. Phosphoenolpyruvate is bound by residues arginine 343 and arginine 385.

The protein belongs to the EPSP synthase family. As to quaternary structure, monomer.

It is found in the cytoplasm. It catalyses the reaction 3-phosphoshikimate + phosphoenolpyruvate = 5-O-(1-carboxyvinyl)-3-phosphoshikimate + phosphate. It functions in the pathway metabolic intermediate biosynthesis; chorismate biosynthesis; chorismate from D-erythrose 4-phosphate and phosphoenolpyruvate: step 6/7. Its function is as follows. Catalyzes the transfer of the enolpyruvyl moiety of phosphoenolpyruvate (PEP) to the 5-hydroxyl of shikimate-3-phosphate (S3P) to produce enolpyruvyl shikimate-3-phosphate and inorganic phosphate. The protein is 3-phosphoshikimate 1-carboxyvinyltransferase of Streptococcus pneumoniae (strain Hungary19A-6).